The following is a 133-amino-acid chain: MATIQVSVITPDGAVYEGDAELVVVKTVEGELGIKAKHIPLVSPLAVGPARFIKEGKEEQVAVSSGFVEVRPDHVSILAEAAERPEQIDTERARKAKERAEQRLASEHVDRKRAEAALQRAITRMDVAKHKGA.

The segment at 81–110 (AAERPEQIDTERARKAKERAEQRLASEHVD) is disordered.

It belongs to the ATPase epsilon chain family. As to quaternary structure, F-type ATPases have 2 components, CF(1) - the catalytic core - and CF(0) - the membrane proton channel. CF(1) has five subunits: alpha(3), beta(3), gamma(1), delta(1), epsilon(1). CF(0) has three main subunits: a, b and c.

It is found in the cell membrane. Its function is as follows. Produces ATP from ADP in the presence of a proton gradient across the membrane. This is ATP synthase epsilon chain from Shouchella clausii (strain KSM-K16) (Alkalihalobacillus clausii).